The following is a 711-amino-acid chain: DNA ligase (711 aa).

Residues 1–21 form a disordered region; the sequence is MNATHRGAQADASAPAGGLPP. The segment covering 10-21 has biased composition (low complexity); that stretch reads ADASAPAGGLPP. NAD(+)-binding positions include 52–56, 101–102, and Glu146; these read DAEYD and SL. Lys148 (N6-AMP-lysine intermediate) is an active-site residue. 4 residues coordinate NAD(+): Arg169, Glu205, Lys322, and Lys346. Residues Cys440, Cys443, Cys458, and Cys464 each contribute to the Zn(2+) site. Residues 623-711 form the BRCT domain; that stretch reads RAPAPLAGKT…VGAGQPGEQS (89 aa).

This sequence belongs to the NAD-dependent DNA ligase family. LigA subfamily. It depends on Mg(2+) as a cofactor. Mn(2+) serves as cofactor.

The catalysed reaction is NAD(+) + (deoxyribonucleotide)n-3'-hydroxyl + 5'-phospho-(deoxyribonucleotide)m = (deoxyribonucleotide)n+m + AMP + beta-nicotinamide D-nucleotide.. DNA ligase that catalyzes the formation of phosphodiester linkages between 5'-phosphoryl and 3'-hydroxyl groups in double-stranded DNA using NAD as a coenzyme and as the energy source for the reaction. It is essential for DNA replication and repair of damaged DNA. The chain is DNA ligase from Cupriavidus pinatubonensis (strain JMP 134 / LMG 1197) (Cupriavidus necator (strain JMP 134)).